The chain runs to 307 residues: Ribonuclease Z (307 aa).

Residues His64, His66, Asp68, His69, His141, Asp209, and His267 each coordinate Zn(2+). Asp68 functions as the Proton acceptor in the catalytic mechanism.

This sequence belongs to the RNase Z family. In terms of assembly, homodimer. The cofactor is Zn(2+).

It carries out the reaction Endonucleolytic cleavage of RNA, removing extra 3' nucleotides from tRNA precursor, generating 3' termini of tRNAs. A 3'-hydroxy group is left at the tRNA terminus and a 5'-phosphoryl group is left at the trailer molecule.. Functionally, zinc phosphodiesterase, which displays some tRNA 3'-processing endonuclease activity. Probably involved in tRNA maturation, by removing a 3'-trailer from precursor tRNA. The chain is Ribonuclease Z from Thermoplasma acidophilum (strain ATCC 25905 / DSM 1728 / JCM 9062 / NBRC 15155 / AMRC-C165).